Consider the following 91-residue polypeptide: Acylphosphatase (91 aa).

An Acylphosphatase-like domain is found at 3 to 90 (RVSMIVSGQV…CGYSIFTIRR (88 aa)). Catalysis depends on residues Arg-18 and Asn-36.

This sequence belongs to the acylphosphatase family.

It catalyses the reaction an acyl phosphate + H2O = a carboxylate + phosphate + H(+). This is Acylphosphatase (acyP) from Methanospirillum hungatei JF-1 (strain ATCC 27890 / DSM 864 / NBRC 100397 / JF-1).